A 914-amino-acid chain; its full sequence is Valine--tRNA ligase (914 aa).

Residues 45 to 55 (PNVTGSLHMGH) carry the 'HIGH' region motif. Positions 538–542 (KMSKS) match the 'KMSKS' region motif. K541 is a binding site for ATP. Residues 847-914 (LVDLDALKGR…LARKRLADLS (68 aa)) adopt a coiled-coil conformation.

It belongs to the class-I aminoacyl-tRNA synthetase family. ValS type 1 subfamily. Monomer.

It is found in the cytoplasm. The catalysed reaction is tRNA(Val) + L-valine + ATP = L-valyl-tRNA(Val) + AMP + diphosphate. Functionally, catalyzes the attachment of valine to tRNA(Val). As ValRS can inadvertently accommodate and process structurally similar amino acids such as threonine, to avoid such errors, it has a 'posttransfer' editing activity that hydrolyzes mischarged Thr-tRNA(Val) in a tRNA-dependent manner. The chain is Valine--tRNA ligase from Parasynechococcus marenigrum (strain WH8102).